The following is a 203-amino-acid chain: Pyridoxine/pyridoxamine 5'-phosphate oxidase (203 aa).

FMN-binding positions include 50–55, 65–66, lysine 72, and glutamine 94; these read RMVLLK and YT. Lysine 55 provides a ligand contact to substrate. Positions 112, 116, and 120 each coordinate substrate. Residues 129–130 and tryptophan 174 each bind FMN; that span reads QS. 180–182 serves as a coordination point for substrate; the sequence is RLH. Residue arginine 184 coordinates FMN.

Belongs to the pyridoxamine 5'-phosphate oxidase family. In terms of assembly, homodimer. FMN serves as cofactor.

It carries out the reaction pyridoxamine 5'-phosphate + O2 + H2O = pyridoxal 5'-phosphate + H2O2 + NH4(+). The catalysed reaction is pyridoxine 5'-phosphate + O2 = pyridoxal 5'-phosphate + H2O2. Its pathway is cofactor metabolism; pyridoxal 5'-phosphate salvage; pyridoxal 5'-phosphate from pyridoxamine 5'-phosphate: step 1/1. It participates in cofactor metabolism; pyridoxal 5'-phosphate salvage; pyridoxal 5'-phosphate from pyridoxine 5'-phosphate: step 1/1. Its function is as follows. Catalyzes the oxidation of either pyridoxine 5'-phosphate (PNP) or pyridoxamine 5'-phosphate (PMP) into pyridoxal 5'-phosphate (PLP). The sequence is that of Pyridoxine/pyridoxamine 5'-phosphate oxidase from Brucella anthropi (strain ATCC 49188 / DSM 6882 / CCUG 24695 / JCM 21032 / LMG 3331 / NBRC 15819 / NCTC 12168 / Alc 37) (Ochrobactrum anthropi).